The sequence spans 112 residues: Small ribosomal subunit protein uS17 (112 aa).

It belongs to the universal ribosomal protein uS17 family. Part of the 30S ribosomal subunit.

Its function is as follows. One of the primary rRNA binding proteins, it binds specifically to the 5'-end of 16S ribosomal RNA. The protein is Small ribosomal subunit protein uS17 of Haloarcula marismortui (strain ATCC 43049 / DSM 3752 / JCM 8966 / VKM B-1809) (Halobacterium marismortui).